Here is a 121-residue protein sequence, read N- to C-terminus: Large ribosomal subunit protein uL14 (121 aa).

This sequence belongs to the universal ribosomal protein uL14 family. In terms of assembly, part of the 50S ribosomal subunit. Forms a cluster with proteins L3 and L19. In the 70S ribosome, L14 and L19 interact and together make contacts with the 16S rRNA in bridges B5 and B8.

Its function is as follows. Binds to 23S rRNA. Forms part of two intersubunit bridges in the 70S ribosome. The chain is Large ribosomal subunit protein uL14 from Prochlorococcus marinus (strain MIT 9313).